Reading from the N-terminus, the 829-residue chain is Translation initiation factor IF-2 (829 aa).

Basic and acidic residues predominate over residues 128-137 (QNAEEEKVEA). Residues 128–157 (QNAEEEKVEASAKTVQNNEDIQPQTSKKKE) form a disordered region. Over residues 140–152 (KTVQNNEDIQPQT) the composition is skewed to polar residues. In terms of domain architecture, tr-type G spans 327-497 (TRAPVVTVMG…LLIAEMQDLK (171 aa)). A G1 region spans residues 336–343 (GHVDHGKT). A GTP-binding site is contributed by 336-343 (GHVDHGKT). The segment at 361–365 (GITQH) is G2. The interval 383 to 386 (DTPG) is G3. Residues 383–387 (DTPGH) and 437–440 (NKID) contribute to the GTP site. Residues 437–440 (NKID) form a G4 region. Residues 473–475 (SAL) form a G5 region.

It belongs to the TRAFAC class translation factor GTPase superfamily. Classic translation factor GTPase family. IF-2 subfamily.

The protein resides in the cytoplasm. Functionally, one of the essential components for the initiation of protein synthesis. Protects formylmethionyl-tRNA from spontaneous hydrolysis and promotes its binding to the 30S ribosomal subunits. Also involved in the hydrolysis of GTP during the formation of the 70S ribosomal complex. The sequence is that of Translation initiation factor IF-2 from Rickettsia felis (strain ATCC VR-1525 / URRWXCal2) (Rickettsia azadi).